The sequence spans 239 residues: Orotidine 5'-phosphate decarboxylase (239 aa).

Residues D10, K32, 59–68, T122, R184, Q193, G213, and R214 each bind substrate; that span reads DLKLHDIPNT. The active-site Proton donor is the K61.

This sequence belongs to the OMP decarboxylase family. Type 1 subfamily. In terms of assembly, homodimer.

The catalysed reaction is orotidine 5'-phosphate + H(+) = UMP + CO2. Its pathway is pyrimidine metabolism; UMP biosynthesis via de novo pathway; UMP from orotate: step 2/2. Functionally, catalyzes the decarboxylation of orotidine 5'-monophosphate (OMP) to uridine 5'-monophosphate (UMP). The chain is Orotidine 5'-phosphate decarboxylase from Geobacillus thermodenitrificans (strain NG80-2).